A 191-amino-acid polypeptide reads, in one-letter code: Cell division protein SepF (191 aa).

Residues 153 to 178 (FPEEVSPSNISSKKTSPYSLETNTTP) show a composition bias toward polar residues. The interval 153 to 191 (FPEEVSPSNISSKKTSPYSLETNTTPEPAWGESKLSAFS) is disordered.

Belongs to the SepF family. As to quaternary structure, homodimer. Interacts with FtsZ.

It localises to the cytoplasm. Functionally, cell division protein that is part of the divisome complex and is recruited early to the Z-ring. Probably stimulates Z-ring formation, perhaps through the cross-linking of FtsZ protofilaments. Its function overlaps with FtsA. The polypeptide is Cell division protein SepF (Prochlorococcus marinus (strain MIT 9515)).